The primary structure comprises 263 residues: Proteasome subunit alpha type-1 (263 aa).

M1 carries the N-acetylmethionine modification. S110 carries the phosphoserine; alternate modification. A glycan (O-linked (GlcNAc) serine; alternate) is linked at S110. K115 participates in a covalent cross-link: Glycyl lysine isopeptide (Lys-Gly) (interchain with G-Cter in ubiquitin). Position 177 is a phosphoserine (S177). K208 is covalently cross-linked (Glycyl lysine isopeptide (Lys-Gly) (interchain with G-Cter in ubiquitin)). Residues 232 to 263 (FLEGLEERPQRKAQPAQPADEPAEKADEPMEH) form a disordered region. Basic and acidic residues predominate over residues 253–263 (PAEKADEPMEH).

The protein belongs to the peptidase T1A family. The 26S proteasome consists of a 20S proteasome core and two 19S regulatory subunits. The 20S proteasome core is a barrel-shaped complex made of 28 subunits that are arranged in four stacked rings. The two outer rings are each formed by seven alpha subunits, and the two inner rings are formed by seven beta subunits. The proteolytic activity is exerted by three beta-subunits PSMB5, PSMB6 and PSMB7. Interacts with NOTCH3. Interacts with ZFAND1.

The protein localises to the cytoplasm. The protein resides in the nucleus. Component of the 20S core proteasome complex involved in the proteolytic degradation of most intracellular proteins. This complex plays numerous essential roles within the cell by associating with different regulatory particles. Associated with two 19S regulatory particles, forms the 26S proteasome and thus participates in the ATP-dependent degradation of ubiquitinated proteins. The 26S proteasome plays a key role in the maintenance of protein homeostasis by removing misfolded or damaged proteins that could impair cellular functions, and by removing proteins whose functions are no longer required. Associated with the PA200 or PA28, the 20S proteasome mediates ubiquitin-independent protein degradation. This type of proteolysis is required in several pathways including spermatogenesis (20S-PA200 complex) or generation of a subset of MHC class I-presented antigenic peptides (20S-PA28 complex). The sequence is that of Proteasome subunit alpha type-1 from Homo sapiens (Human).